We begin with the raw amino-acid sequence, 208 residues long: Thymidylate kinase (208 aa).

10-17 (GPEGSGKT) is an ATP binding site.

This sequence belongs to the thymidylate kinase family.

It catalyses the reaction dTMP + ATP = dTDP + ADP. Functionally, phosphorylation of dTMP to form dTDP in both de novo and salvage pathways of dTTP synthesis. The protein is Thymidylate kinase of Bacillus cereus (strain AH187).